The chain runs to 293 residues: Urease accessory protein UreD (293 aa).

Residues 1–22 are disordered; the sequence is MAVAQQAWSPGADPAPSAAPVS. The segment covering 7-22 has biased composition (low complexity); it reads AWSPGADPAPSAAPVS.

Belongs to the UreD family. As to quaternary structure, ureD, UreF and UreG form a complex that acts as a GTP-hydrolysis-dependent molecular chaperone, activating the urease apoprotein by helping to assemble the nickel containing metallocenter of UreC. The UreE protein probably delivers the nickel.

The protein resides in the cytoplasm. Functionally, required for maturation of urease via the functional incorporation of the urease nickel metallocenter. This chain is Urease accessory protein UreD, found in Alkalilimnicola ehrlichii (strain ATCC BAA-1101 / DSM 17681 / MLHE-1).